The chain runs to 211 residues: Uracil phosphoribosyltransferase (211 aa).

5-phospho-alpha-D-ribose 1-diphosphate contacts are provided by residues Arg77, Arg102, and 129 to 137 (DPMLATGGS). Uracil contacts are provided by residues Ile192 and 197 to 199 (GDA). Asp198 is a binding site for 5-phospho-alpha-D-ribose 1-diphosphate.

Belongs to the UPRTase family. Requires Mg(2+) as cofactor.

The catalysed reaction is UMP + diphosphate = 5-phospho-alpha-D-ribose 1-diphosphate + uracil. The protein operates within pyrimidine metabolism; UMP biosynthesis via salvage pathway; UMP from uracil: step 1/1. Its activity is regulated as follows. Allosterically activated by GTP. Functionally, catalyzes the conversion of uracil and 5-phospho-alpha-D-ribose 1-diphosphate (PRPP) to UMP and diphosphate. This Corynebacterium glutamicum (strain R) protein is Uracil phosphoribosyltransferase.